Reading from the N-terminus, the 39-residue chain is Glutenin, high molecular weight subunit PC237 (39 aa).

The protein belongs to the gliadin/glutenin family. Disulfide-bridge linked aggregates.

In terms of biological role, glutenins are high-molecular weight seed storage proteins of wheat endosperm. Thought to be responsible for the visco-elastic property of wheat dough. This is Glutenin, high molecular weight subunit PC237 from Triticum aestivum (Wheat).